A 1005-amino-acid chain; its full sequence is PH and SEC7 domain-containing protein 4 (1005 aa).

Residues 27 to 66 (YPSEIHGHPGPSEPCQEHTCPFDPPESARPDAPHGNSGVE) are disordered. Serine 85, serine 88, and serine 97 each carry phosphoserine. Disordered stretches follow at residues 145 to 189 (PSKD…PGSS), 287 to 386 (LALG…NRGE), 407 to 525 (TSLL…SSSR), and 694 to 714 (EEDA…KISS). The span at 161–177 (EEDEDSGDDSSGPEEEN) shows a compositional bias: acidic residues. A compositionally biased stretch (low complexity) spans 350–361 (SQTSQSLSDLTQ). 2 positions are modified to phosphoserine: serine 381 and serine 435. Positions 428–438 (PVSSQDSSPRV) are enriched in low complexity. Composition is skewed to basic and acidic residues over residues 453 to 465 (LQKD…SLKE) and 476 to 488 (QEAE…RSED). Residues 493-686 (QHHVHLASAE…KALYWSIRSE (194 aa)) form the SEC7 domain. The region spanning 726-841 (PTYKQGILAR…WIARINLAAA (116 aa)) is the PH domain. The stretch at 870 to 926 (SSLEEQHRSHENCLDAASDDLLDLQRNLPERRGRSRELEEYRLRKEYLEHEKTRYET) forms a coiled coil. The interval 951-1005 (KETDGSQEPRPSLKKSHSSPSLHQEEAPTTAKVKRNISERRTYRKIIPKRNRNQL) is disordered. A phosphoserine mark is found at serine 968 and serine 971. Basic residues predominate over residues 992–1005 (TYRKIIPKRNRNQL).

It localises to the cell membrane. Its subcellular location is the cell projection. It is found in the ruffle membrane. In terms of biological role, guanine nucleotide exchange factor for ARF6 and ARL14/ARF7. Through ARL14 activation, controls the movement of MHC class II-containing vesicles along the actin cytoskeleton in dendritic cells. Involved in membrane recycling. Interacts with several phosphatidylinositol phosphate species, including phosphatidylinositol 3,4-bisphosphate, phosphatidylinositol 3,5-bisphosphate and phosphatidylinositol 4,5-bisphosphate. The protein is PH and SEC7 domain-containing protein 4 (Psd4) of Mus musculus (Mouse).